The primary structure comprises 481 residues: G-protein coupled receptor 37-like 1 (481 aa).

The N-terminal stretch at 1–24 (MRWLWPLAVSLAVVLAVGPSEVSG) is a signal peptide. Residues 25–134 (AATLSLGGHR…ESSYSAYAVM (110 aa)) lie on the Extracellular side of the membrane. Disordered stretches follow at residues 30–55 (LGGH…GPKE) and 76–107 (LQPT…TNLT). Positions 95-107 (TSESGQELRTNLT) are enriched in polar residues. N-linked (GlcNAc...) asparagine glycosylation occurs at Asn105. A helical transmembrane segment spans residues 135-155 (LLALVVFAVGIVGNLSVMCIV). Residues 156-167 (WHSYYLKSAWNS) lie on the Cytoplasmic side of the membrane. A helical transmembrane segment spans residues 168–188 (ILASLALWDFLVLFFCLPIVI). At 189–205 (FNEITKQRLLGDVSCRA) the chain is on the extracellular side. Cys203 and Cys286 are joined by a disulfide. A helical transmembrane segment spans residues 206 to 226 (VPFMEVSSLGVTTFSLCALGI). At 227–251 (DRFHVATSTLPKVRPIERCQSILAK) the chain is on the cytoplasmic side. A helical membrane pass occupies residues 252 to 272 (LAVIWVGSMMLAVPELLLWQL). Residues 273 to 310 (AQEPTPTMGTVDSCIMKPSADLPESLYSLVMTYQNARM) are Extracellular-facing. A helical membrane pass occupies residues 311–331 (WWYFGCYFCLPILFTVTCQLV). The Cytoplasmic segment spans residues 332–360 (TWRVRGPPGRKPECRAGRHEQCESQLNST). A helical membrane pass occupies residues 361-381 (VVGLTVVYAFCTLPENICNIV). Over 382-398 (VAYLSTELTRQTLDLLG) the chain is Extracellular. Residues 399–419 (LINQFSTFFKGAITPVLLLCI) form a helical membrane-spanning segment. Over 420-481 (CRPLGQAFLD…PPLLPLGTPC (62 aa)) the chain is Cytoplasmic. The residue at position 471 (Ser471) is a Phosphoserine. Thr479 carries the phosphothreonine modification.

This sequence belongs to the G-protein coupled receptor 1 family. In terms of assembly, interacts with the PTCH1 receptor. Undergoes metalloprotease-mediated cleavage which reduces its constitutive activity. In terms of processing, ubiquitinated. Highly expressed in brain.

The protein resides in the cell membrane. It localises to the cell projection. Its subcellular location is the cilium membrane. In terms of biological role, G-protein coupled receptor. Has been shown to bind the neuroprotective and glioprotective factor prosaposin (PSAP), leading to endocytosis followed by an ERK phosphorylation cascade. However, other studies have shown that prosaposin does not increase activity. It has been suggested that GPR37L1 is a constitutively active receptor which signals through the guanine nucleotide-binding protein G(s) subunit alpha. Participates in the regulation of postnatal cerebellar development by modulating the Shh pathway. Regulates baseline blood pressure in females and protects against cardiovascular stress in males. Mediates inhibition of astrocyte glutamate transporters and reduction in neuronal N-methyl-D-aspartate receptor activity. The polypeptide is G-protein coupled receptor 37-like 1 (Gpr37l1) (Rattus norvegicus (Rat)).